We begin with the raw amino-acid sequence, 449 residues long: Aspartyl protease AED3 (449 aa).

A signal peptide spans methionine 1–alanine 23. The 341-residue stretch at tyrosine 104–alanine 444 folds into the Peptidase A1 domain. The active site involves aspartate 122. A disulfide bridge links cysteine 132 with cysteine 138. N-linked (GlcNAc...) asparagine glycans are attached at residues asparagine 140, asparagine 148, asparagine 184, asparagine 211, and asparagine 297. Residue aspartate 328 is part of the active site. Asparagine 353 carries N-linked (GlcNAc...) asparagine glycosylation. A disulfide bridge connects residues cysteine 366 and cysteine 405.

The protein belongs to the peptidase A1 family.

Its subcellular location is the secreted. The protein resides in the extracellular space. It is found in the apoplast. This is Aspartyl protease AED3 from Arabidopsis thaliana (Mouse-ear cress).